The following is a 300-amino-acid chain: GTPase Era (300 aa).

An Era-type G domain is found at 4-172; the sequence is KSGFVALAGK…LEKIKEELPE (169 aa). A G1 region spans residues 12 to 19; it reads GKPNVGKS. 12–19 provides a ligand contact to GTP; sequence GKPNVGKS. A G2 region spans residues 38–42; sequence QTTRN. The interval 59–62 is G3; it reads DTPG. GTP is bound by residues 59–63 and 121–124; these read DTPGI and NKID. Positions 121–124 are G4; it reads NKID. The G5 stretch occupies residues 151 to 153; the sequence is ISA. One can recognise a KH type-2 domain in the interval 195–280; it reads IREKIFHLTR…YLDLNVKVKE (86 aa).

The protein belongs to the TRAFAC class TrmE-Era-EngA-EngB-Septin-like GTPase superfamily. Era GTPase family. As to quaternary structure, monomer.

It localises to the cytoplasm. The protein resides in the cell inner membrane. In terms of biological role, an essential GTPase that binds both GDP and GTP, with rapid nucleotide exchange. Plays a role in 16S rRNA processing and 30S ribosomal subunit biogenesis and possibly also in cell cycle regulation and energy metabolism. The protein is GTPase Era of Thermotoga maritima (strain ATCC 43589 / DSM 3109 / JCM 10099 / NBRC 100826 / MSB8).